The primary structure comprises 149 residues: Large ribosomal subunit protein uL22c (149 aa).

The protein belongs to the universal ribosomal protein uL22 family. As to quaternary structure, part of the 50S ribosomal subunit.

The protein localises to the plastid. It localises to the chloroplast. In terms of biological role, this protein binds specifically to 23S rRNA. The globular domain of the protein is located near the polypeptide exit tunnel on the outside of the subunit, while an extended beta-hairpin is found that lines the wall of the exit tunnel in the center of the 70S ribosome. This chain is Large ribosomal subunit protein uL22c (rpl22), found in Hordeum vulgare (Barley).